Reading from the N-terminus, the 255-residue chain is Phosphoribosyl isomerase A (255 aa).

Catalysis depends on Asp-21, which acts as the Proton acceptor. The active-site Proton donor is the Asp-140.

The protein belongs to the HisA/HisF family.

It localises to the cytoplasm. The catalysed reaction is 1-(5-phospho-beta-D-ribosyl)-5-[(5-phospho-beta-D-ribosylamino)methylideneamino]imidazole-4-carboxamide = 5-[(5-phospho-1-deoxy-D-ribulos-1-ylimino)methylamino]-1-(5-phospho-beta-D-ribosyl)imidazole-4-carboxamide. It catalyses the reaction N-(5-phospho-beta-D-ribosyl)anthranilate = 1-(2-carboxyphenylamino)-1-deoxy-D-ribulose 5-phosphate. The protein operates within amino-acid biosynthesis; L-histidine biosynthesis; L-histidine from 5-phospho-alpha-D-ribose 1-diphosphate: step 4/9. Its pathway is amino-acid biosynthesis; L-tryptophan biosynthesis; L-tryptophan from chorismate: step 3/5. Its function is as follows. Involved in both the histidine and tryptophan biosynthetic pathways. The sequence is that of Phosphoribosyl isomerase A from Mycolicibacterium vanbaalenii (strain DSM 7251 / JCM 13017 / BCRC 16820 / KCTC 9966 / NRRL B-24157 / PYR-1) (Mycobacterium vanbaalenii).